Reading from the N-terminus, the 505-residue chain is Cytochrome P450 4Z1 (505 aa).

Over 1–9 the chain is Cytoplasmic; it reads MEPSWLQEL. A helical; Signal-anchor for type II membrane protein membrane pass occupies residues 10 to 30; that stretch reads MAHPFLLLILLCMSLLLFQVI. The Lumenal portion of the chain corresponds to 31–505; it reads RLYQRRRWMI…GIHVFAKKVC (475 aa). Residue C452 participates in heme binding.

It belongs to the cytochrome P450 family. The cofactor is heme. As to expression, preferentially detected in breast carcinoma tissue and mammary gland, whereas only marginal expression is found in all other tested tissues.

Its subcellular location is the endoplasmic reticulum membrane. The protein resides in the microsome membrane. It catalyses the reaction an organic molecule + reduced [NADPH--hemoprotein reductase] + O2 = an alcohol + oxidized [NADPH--hemoprotein reductase] + H2O + H(+). It carries out the reaction dodecanoate + reduced [NADPH--hemoprotein reductase] + O2 = 7-hydroxydodecanoate + oxidized [NADPH--hemoprotein reductase] + H2O + H(+). The catalysed reaction is dodecanoate + reduced [NADPH--hemoprotein reductase] + O2 = 8-hydroxydodecanoate + oxidized [NADPH--hemoprotein reductase] + H2O + H(+). The enzyme catalyses dodecanoate + reduced [NADPH--hemoprotein reductase] + O2 = 9-hydroxydodecanoate + oxidized [NADPH--hemoprotein reductase] + H2O + H(+). It catalyses the reaction dodecanoate + reduced [NADPH--hemoprotein reductase] + O2 = 10-hydroxydodecanoate + oxidized [NADPH--hemoprotein reductase] + H2O + H(+). It carries out the reaction dodecanoate + reduced [NADPH--hemoprotein reductase] + O2 = 11-hydroxydodecanoate + oxidized [NADPH--hemoprotein reductase] + H2O + H(+). The catalysed reaction is tetradecanoate + reduced [NADPH--hemoprotein reductase] + O2 = 9-hydroxytetradecanoate + oxidized [NADPH--hemoprotein reductase] + H2O + H(+). The enzyme catalyses tetradecanoate + reduced [NADPH--hemoprotein reductase] + O2 = 10-hydroxytetradecanoate + oxidized [NADPH--hemoprotein reductase] + H2O + H(+). It catalyses the reaction tetradecanoate + reduced [NADPH--hemoprotein reductase] + O2 = 11-hydroxytetradecanoate + oxidized [NADPH--hemoprotein reductase] + H2O + H(+). It carries out the reaction tetradecanoate + reduced [NADPH--hemoprotein reductase] + O2 = 12-hydroxytetradecanoate + oxidized [NADPH--hemoprotein reductase] + H2O + H(+). The catalysed reaction is (5Z,8Z,11Z,14Z)-eicosatetraenoate + reduced [NADPH--hemoprotein reductase] + O2 = (14S,15R)-epoxy-(5Z,8Z,11Z)-eicosatrienoate + oxidized [NADPH--hemoprotein reductase] + H2O + H(+). Its function is as follows. A cytochrome P450 monooxygenase that catalyzes the in-chain oxidation of fatty acids. Catalyzes the hydroxylation of carbon-hydrogen bonds. Hydroxylates lauric and myristic acids predominantly at the omega-4 and omega-2 positions, respectively. Catalyzes the epoxidation of double bonds of polyunsaturated fatty acids (PUFA). Displays an absolute stereoselectivity in the epoxidation of arachidonic acid producing the 14(S),15(R)-epoxyeicosatrienoic acid (EET) enantiomer. Mechanistically, uses molecular oxygen inserting one oxygen atom into a substrate, and reducing the second into a water molecule, with two electrons provided by NADPH via cytochrome P450 reductase (CPR; NADPH-ferrihemoprotein reductase). The chain is Cytochrome P450 4Z1 from Homo sapiens (Human).